A 943-amino-acid chain; its full sequence is Translation initiation factor IF-2 (943 aa).

Residues 99 to 113 are compositionally biased toward low complexity; sequence VKAAQTQAAPVQPEQ. The interval 99-354 is disordered; that stretch reads VKAAQTQAAP…LEPNQHAFQA (256 aa). Over residues 117-141 the composition is skewed to basic and acidic residues; the sequence is DAVKARAEAAARAEARAKAEAEAAK. Low complexity predominate over residues 145-172; that stretch reads AKAGNKAKPAAQKPTEAKAETAPVAAET. Over residues 173 to 197 the composition is skewed to basic and acidic residues; the sequence is KPAEPKEKAVKPKHERNGKGKDAKK. The span at 200–215 shows a compositional bias: low complexity; it reads KPAAPAVPQPVVSAEE. The span at 216–250 shows a compositional bias: basic and acidic residues; that stretch reads QAQRDEEARRAAALRAHQEALLKEKQERQARREAM. Residues 251–264 show a composition bias toward low complexity; sequence KQQAEQQAKAAQEA. Composition is skewed to basic and acidic residues over residues 295–308 and 319–335; these read AKKEDRRNRDDEGQ and GGRDRNNARNGGDERVR. One can recognise a tr-type G domain in the interval 443–612; sequence PRPPVVTVMG…LLEAEVLELT (170 aa). Residues 452–459 form a G1 region; that stretch reads GHVDHGKT. Residue 452–459 participates in GTP binding; the sequence is GHVDHGKT. The tract at residues 477–481 is G2; sequence GITQH. Positions 498-501 are G3; the sequence is DTPG. Residues 498 to 502 and 552 to 555 contribute to the GTP site; these read DTPGH and NKID. The interval 552–555 is G4; it reads NKID. Residues 588-590 form a G5 region; it reads SAK.

Belongs to the TRAFAC class translation factor GTPase superfamily. Classic translation factor GTPase family. IF-2 subfamily.

The protein resides in the cytoplasm. In terms of biological role, one of the essential components for the initiation of protein synthesis. Protects formylmethionyl-tRNA from spontaneous hydrolysis and promotes its binding to the 30S ribosomal subunits. Also involved in the hydrolysis of GTP during the formation of the 70S ribosomal complex. The chain is Translation initiation factor IF-2 from Neisseria gonorrhoeae (strain ATCC 700825 / FA 1090).